The following is a 1888-amino-acid chain: Nuclear pore membrane glycoprotein 210-like (1888 aa).

A signal peptide spans 1–35; it reads MTGCPASSRRRGFGLFFFLRLHRLLLLFLVLRGTL. N-linked (GlcNAc...) asparagine glycans are attached at residues N84, N304, N348, N495, N522, N812, and N931. Residues 1082–1154 form the BIG2 domain; the sequence is FPPFRLLPEK…TIQTVNEDTG (73 aa). The N-linked (GlcNAc...) asparagine glycan is linked to N1445. Residues 1813-1833 traverse the membrane as a helical segment; sequence ILLLTLFAVLASTASIFLAYN. The N-linked (GlcNAc...) asparagine glycan is linked to N1859.

The protein belongs to the NUP210 family.

It is found in the nucleus membrane. The polypeptide is Nuclear pore membrane glycoprotein 210-like (NUP210L) (Homo sapiens (Human)).